The following is a 156-amino-acid chain: C-type lectin lectoxin-Lei1 (156 aa).

A signal peptide spans 1 to 23; it reads MRRFLFLSLGVLVVAFSLNGIGA. 3 cysteine pairs are disulfide-bonded: C27/C38, C55/C154, and C129/C146. The C-type lectin domain maps to 34–155; the sequence is FDRFCYKVIK…CESRNIFICK (122 aa). Residues N60 and N99 are each glycosylated (N-linked (GlcNAc...) asparagine). Positions 119 to 121 match the Sugar-binding motif; it reads KRN. N142 contributes to the Ca(2+) binding site.

This sequence belongs to the true venom lectin family. As to expression, expressed by the venom gland.

Its subcellular location is the secreted. Lectin which recognizes specific carbohydrate structures and agglutinates a variety of animal cells by binding to cell-surface glycoproteins and glycolipids. May be a calcium-dependent lectin. The sequence is that of C-type lectin lectoxin-Lei1 from Leioheterodon madagascariensis (Malagasy giant hognose snake).